A 62-amino-acid polypeptide reads, in one-letter code: Calmodulin regulator protein PCP4 (62 aa).

The interval 1–40 is disordered; the sequence is MSERQGAGTTNGKDKPSGENDGQKKVQEEFDIDMDAPETE. Residues 12–28 show a composition bias toward basic and acidic residues; that stretch reads GKDKPSGENDGQKKVQE. Residues 28–40 form an acidic; binds calcium and is required for modulating the calcium-binding kinetics of calmodulin region; it reads EEFDIDMDAPETE. In terms of domain architecture, IQ spans 39–62; sequence TERAAVAIQSQFRKFQKKKAGSQS.

The protein belongs to the PCP4 family. Binds to both calcium-free and calcium-bound calmodulin. The affinity for the calcium-bound form is 50-fold greater.

Its function is as follows. Functions as a modulator of calcium-binding by calmodulin. Thereby, regulates calmodulin activity and the different processes it controls. For instance, may play a role in neuronal differentiation through activation of calmodulin-dependent kinase signaling pathways. The chain is Calmodulin regulator protein PCP4 from Bos taurus (Bovine).